Here is a 549-residue protein sequence, read N- to C-terminus: Glucose-6-phosphate isomerase (549 aa).

Glu354 (proton donor) is an active-site residue. Active-site residues include His385 and Lys513.

It belongs to the GPI family.

It localises to the cytoplasm. It catalyses the reaction alpha-D-glucose 6-phosphate = beta-D-fructose 6-phosphate. Its pathway is carbohydrate biosynthesis; gluconeogenesis. It functions in the pathway carbohydrate degradation; glycolysis; D-glyceraldehyde 3-phosphate and glycerone phosphate from D-glucose: step 2/4. Its function is as follows. Catalyzes the reversible isomerization of glucose-6-phosphate to fructose-6-phosphate. The sequence is that of Glucose-6-phosphate isomerase from Nitrosococcus oceani (strain ATCC 19707 / BCRC 17464 / JCM 30415 / NCIMB 11848 / C-107).